The chain runs to 427 residues: Glutamate-1-semialdehyde 2,1-aminomutase (427 aa).

The residue at position 265 (Lys-265) is an N6-(pyridoxal phosphate)lysine.

Belongs to the class-III pyridoxal-phosphate-dependent aminotransferase family. HemL subfamily. As to quaternary structure, homodimer. Pyridoxal 5'-phosphate serves as cofactor.

The protein resides in the cytoplasm. The catalysed reaction is (S)-4-amino-5-oxopentanoate = 5-aminolevulinate. It functions in the pathway porphyrin-containing compound metabolism; protoporphyrin-IX biosynthesis; 5-aminolevulinate from L-glutamyl-tRNA(Glu): step 2/2. This chain is Glutamate-1-semialdehyde 2,1-aminomutase, found in Burkholderia orbicola (strain MC0-3).